A 337-amino-acid polypeptide reads, in one-letter code: GDP-mannose transporter 1 (337 aa).

The Cytoplasmic segment spans residues 1-16 (MSELKTGHAGHNPWAS). The chain crosses the membrane as a helical span at residues 17–37 (VANSGPISILSYCGSSILMTV). Over 38-51 (TNKFVVNLKDFNMN) the chain is Lumenal. A helical membrane pass occupies residues 52 to 72 (FVMLFVQSLVCTITLIILRIL). Residues 73 to 92 (GYAKFRSLNKTDAKNWFPIS) lie on the Cytoplasmic side of the membrane. Residues 93–113 (FLLVLMIYTSSKALQYLAVPI) traverse the membrane as a helical segment. Topologically, residues 114-119 (YTIFKN) are lumenal. The N-linked (GlcNAc...) asparagine glycan is linked to N119. Residues 120–140 (LTIILIAYGEVLFFGGSVTSM) traverse the membrane as a helical segment. Residues 141-144 (ELSS) lie on the Cytoplasmic side of the membrane. The chain crosses the membrane as a helical span at residues 145-165 (FLLMVLSSVVATWGDQQAVAA). At 166 to 180 (KAASLAEGAAGAVAS) the chain is on the lumenal side. The chain crosses the membrane as a helical span at residues 181 to 201 (FNPGYFWMFTNCITSALFVLI). Topologically, residues 202–215 (MRKRIKLTNFKDFD) are cytoplasmic. The helical transmembrane segment at 216–236 (TMFYNNVLALPILLLFSFCVE) threads the bilayer. Residues 237–252 (DWSSVNLTNNFSNDSL) are Lumenal-facing. N-linked (GlcNAc...) asparagine glycans are attached at residues N242, N246, and N249. Residues 253-273 (TAMIISGVASVGISYCSGWCV) traverse the membrane as a helical segment. Residues 274–279 (RVTSST) lie on the Cytoplasmic side of the membrane. Residues 280–300 (TYSMVGALNKLPIALSGLIFF) form a helical membrane-spanning segment. Residues 301–304 (DAPR) are Lumenal-facing. Residues 305–325 (NFLSILSIFIGFLSGIIYAVA) traverse the membrane as a helical segment. At 326–337 (KQKKQQAQPLRK) the chain is on the cytoplasmic side.

The protein belongs to the TPT transporter family. SLC35D subfamily. As to quaternary structure, homooligomer.

It localises to the golgi apparatus membrane. The protein resides in the cytoplasmic vesicle membrane. It is found in the endoplasmic reticulum membrane. Involved in the import of GDP-mannose from the cytoplasm into the Golgi lumen. Defective copy causes severe glycosylation defect and abnormal retention of soluble endoplasmic reticulum proteins. Involved in vanadate sensitivity. The polypeptide is GDP-mannose transporter 1 (VRG4) (Saccharomyces cerevisiae (strain YJM789) (Baker's yeast)).